Here is a 436-residue protein sequence, read N- to C-terminus: Acetyl-CoA decarbonylase/synthase complex subunit delta 1 (436 aa).

The protein belongs to the CdhD family. As to quaternary structure, heterodimer of delta and gamma chains. The ACDS complex is made up of alpha, epsilon, beta, gamma and delta chains with a probable stoichiometry of (alpha(2)epsilon(2))(4)-beta(8)-(gamma(1)delta(1))(8) (Potential).

The protein operates within one-carbon metabolism; methanogenesis from acetate. Functionally, part of a complex that catalyzes the reversible cleavage of acetyl-CoA, allowing growth on acetate as sole source of carbon and energy. Probably maintains the overall quaternary structure of the ACDS complex. The chain is Acetyl-CoA decarbonylase/synthase complex subunit delta 1 (cdhD1) from Methanosarcina thermophila.